Reading from the N-terminus, the 308-residue chain is Acetylglutamate kinase (308 aa).

Substrate-binding positions include 73–74 (GG), arginine 95, and asparagine 194.

It belongs to the acetylglutamate kinase family. ArgB subfamily.

It is found in the cytoplasm. It carries out the reaction N-acetyl-L-glutamate + ATP = N-acetyl-L-glutamyl 5-phosphate + ADP. It functions in the pathway amino-acid biosynthesis; L-arginine biosynthesis; N(2)-acetyl-L-ornithine from L-glutamate: step 2/4. Its function is as follows. Catalyzes the ATP-dependent phosphorylation of N-acetyl-L-glutamate. This is Acetylglutamate kinase from Rhodococcus jostii (strain RHA1).